Here is a 508-residue protein sequence, read N- to C-terminus: MGLPWYRVHTVVLNDPGRLLSVHIMHTALVAGWAGSMALYELAVFDPSDPVLDPMWRQGMFVIPFMTRLGITNSWGGWSITGGTVTNPGIWSYEGVAGAHIVFSGLCFLAAIWHWVYWDLEIFCDERTGKPSLDLPKIFGIHLFLSGVACFGFGAFHVTGLYGPGIWVSDPYGLTGKVQPVNPAWGVEGFDPFVPGGIASHHIAAGTLGILAGLFHLSVRPPQRLYKGLRMGNIETVLSSSIAAVFFAAFVVAGTMWYGSATTPIELFGPTRYQWDQGYFQQEIYRRVSAGLAENQSLSEAWSKIPEKLAFYDYIGNNPAKGGLFRAGSMDNGDGIAVGWLGHPIFRDKEGRELFVRRMPTFFETFPVVLVDGDGIVRADVPFRRAESKYSVEQVGVTVEFYGGELNGVSYSDPATVKKYARRAQLGEIFELDRATLKSDGVFRSSPRGWFTFGHASFALLFFFGHIWHGARTLFRDVFAGIDPDLDAQVEFGAFQKLGDPTTKRQAA.

The next 6 membrane-spanning stretches (helical) occupy residues 21–36 (SVHI…WAGS), 101–115 (IVFS…IWHW), 140–156 (GIHL…FGAF), 203–218 (IAAG…FHLS), 237–252 (VLSS…AFVV), and 457–472 (SFAL…HGAR).

This sequence belongs to the PsbB/PsbC family. PsbB subfamily. PSII is composed of 1 copy each of membrane proteins PsbA, PsbB, PsbC, PsbD, PsbE, PsbF, PsbH, PsbI, PsbJ, PsbK, PsbL, PsbM, PsbT, PsbX, PsbY, PsbZ, Psb30/Ycf12, at least 3 peripheral proteins of the oxygen-evolving complex and a large number of cofactors. It forms dimeric complexes. The cofactor is Binds multiple chlorophylls. PSII binds additional chlorophylls, carotenoids and specific lipids..

Its subcellular location is the plastid. The protein resides in the chloroplast thylakoid membrane. In terms of biological role, one of the components of the core complex of photosystem II (PSII). It binds chlorophyll and helps catalyze the primary light-induced photochemical processes of PSII. PSII is a light-driven water:plastoquinone oxidoreductase, using light energy to abstract electrons from H(2)O, generating O(2) and a proton gradient subsequently used for ATP formation. The protein is Photosystem II CP47 reaction center protein of Atropa belladonna (Belladonna).